A 236-amino-acid chain; its full sequence is Probable transcriptional regulatory protein Suden_1389 (236 aa).

This sequence belongs to the TACO1 family.

It localises to the cytoplasm. This is Probable transcriptional regulatory protein Suden_1389 from Sulfurimonas denitrificans (strain ATCC 33889 / DSM 1251) (Thiomicrospira denitrificans (strain ATCC 33889 / DSM 1251)).